A 179-amino-acid polypeptide reads, in one-letter code: Large ribosomal subunit protein uL6 (179 aa).

Belongs to the universal ribosomal protein uL6 family. Part of the 50S ribosomal subunit.

Functionally, this protein binds to the 23S rRNA, and is important in its secondary structure. It is located near the subunit interface in the base of the L7/L12 stalk, and near the tRNA binding site of the peptidyltransferase center. This is Large ribosomal subunit protein uL6 from Syntrophotalea carbinolica (strain DSM 2380 / NBRC 103641 / GraBd1) (Pelobacter carbinolicus).